The primary structure comprises 264 residues: Leukocyte receptor cluster member 1 (264 aa).

Disordered stretches follow at residues 1–37 (MNILPKKSWHVRNKDNVARVRRDEAQAREEEKERERR) and 49–76 (FLRKKARHQNSLPELEAAEAGAPGSGPV). Positions 12–37 (RNKDNVARVRRDEAQAREEEKERERR) are enriched in basic and acidic residues. Residues 16-46 (NVARVRRDEAQAREEEKERERRVLLAQQEAR) are a coiled coil. Ser-59 carries the phosphoserine modification. Residues 59–75 (SLPELEAAEAGAPGSGP) are compositionally biased toward low complexity. Residues 89–115 (VIRGNKEYKEEKRQEKERQEKALGILT) are a coiled coil. Positions 118 to 264 (GQSAAEAQTQ…PRQQDPHLTH (147 aa)) are disordered. 2 stretches are compositionally biased toward basic and acidic residues: residues 146 to 162 (PDEKIKSRLDPLREMQK) and 170 to 214 (HGGD…RSRA). Residues 196 to 222 (LDQLRAERLRREAAERSRAEALLARVQ) adopt a coiled-coil conformation. Position 245 is a phosphoserine (Ser-245).

The polypeptide is Leukocyte receptor cluster member 1 (LENG1) (Homo sapiens (Human)).